The chain runs to 202 residues: NADH-quinone oxidoreductase subunit B (202 aa).

[4Fe-4S] cluster contacts are provided by Cys-81, Cys-82, Cys-146, and Cys-176.

It belongs to the complex I 20 kDa subunit family. As to quaternary structure, NDH-1 is composed of 14 different subunits. Subunits NuoB, C, D, E, F, and G constitute the peripheral sector of the complex. The cofactor is [4Fe-4S] cluster.

The protein resides in the cell inner membrane. The enzyme catalyses a quinone + NADH + 5 H(+)(in) = a quinol + NAD(+) + 4 H(+)(out). In terms of biological role, NDH-1 shuttles electrons from NADH, via FMN and iron-sulfur (Fe-S) centers, to quinones in the respiratory chain. The immediate electron acceptor for the enzyme in this species is believed to be ubiquinone. Couples the redox reaction to proton translocation (for every two electrons transferred, four hydrogen ions are translocated across the cytoplasmic membrane), and thus conserves the redox energy in a proton gradient. The chain is NADH-quinone oxidoreductase subunit B from Bradyrhizobium diazoefficiens (strain JCM 10833 / BCRC 13528 / IAM 13628 / NBRC 14792 / USDA 110).